A 266-amino-acid chain; its full sequence is 15-hydroxyprostaglandin dehydrogenase [NAD(+)] (266 aa).

Residues 12 to 20, 36 to 37, 63 to 65, and Asn-91 each bind NAD(+); these read GAAQGIGKA, DW, and CDV. The substrate site is built by Ser-138 and Gln-148. Tyr-151 acts as the Proton acceptor in catalysis. NAD(+)-binding positions include 151–155 and 186–188; these read YCASK and VKT.

Belongs to the short-chain dehydrogenases/reductases (SDR) family. As to quaternary structure, homodimer.

The protein resides in the cytoplasm. The catalysed reaction is prostaglandin E2 + NAD(+) = 15-oxoprostaglandin E2 + NADH + H(+). The enzyme catalyses (15S)-hydroxy-(5Z,8Z,11Z,13E)-eicosatetraenoate + NAD(+) = 15-oxo-(5Z,8Z,11Z,13E)-eicosatetraenoate + NADH + H(+). It carries out the reaction (11R)-hydroxy-(5Z,8Z,12E,14Z)-eicosatetraenoate + NAD(+) = 11-oxo-(5Z,8Z,12E,14Z)-eicosatetraenoate + NADH + H(+). It catalyses the reaction lipoxin A4 + NAD(+) = 15-oxo-(5S,6R)-dihydroxy-(7E,9E,11Z,13E)-eicosatetraenoate + NADH + H(+). The catalysed reaction is 15-oxo-(5S,6R)-dihydroxy-(7E,9E,11Z)-eicosatrienoate + NADH + H(+) = (5S,6R,15S)-trihydroxy-(7E,9E,11Z)-eicosatrienoate + NAD(+). The enzyme catalyses prostaglandin A1 + NAD(+) = 15-oxo-prostaglandin A1 + NADH + H(+). It carries out the reaction prostaglandin E1 + NAD(+) = 15-oxoprostaglandin E1 + NADH + H(+). It catalyses the reaction 14-hydroxy-(4Z,7Z,10Z,12E,16Z,19Z)-docosahexaenoate + NAD(+) = 14-oxo-(4Z,7Z,10Z,12E,16Z,19Z)-docosahexaenoate + NADH + H(+). The catalysed reaction is resolvin E1 + NAD(+) = 18-oxo-resolvin E1 + NADH + H(+). The enzyme catalyses resolvin D1 + NAD(+) = 8-oxoresolvin D1 + NADH + H(+). It carries out the reaction resolvin D1 + NAD(+) = 17-oxoresolvin D1 + NADH + H(+). It catalyses the reaction resolvin D2 + NAD(+) = 7-oxoresolvin D2 + NADH + H(+). The catalysed reaction is resolvin D2 + NAD(+) = 16-oxoresolvin D2 + NADH + H(+). Catalyzes the NAD-dependent dehydrogenation (oxidation) of a broad array of hydroxylated polyunsaturated fatty acids (mainly eicosanoids and docosanoids, including prostaglandins, lipoxins and resolvins), yielding their corresponding keto (oxo) metabolites. Decreases the levels of the pro-proliferative prostaglandins such as prostaglandin E2 (whose activity is increased in cancer because of an increase in the expression of cyclooxygenase 2) and generates oxo-fatty acid products that can profoundly influence cell function by abrogating pro-inflammatory cytokine expression. Converts resolvins E1, D1 and D2 to their oxo products, which represents a mode of resolvin inactivation. Resolvin E1 plays important roles during the resolution phase of acute inflammation, while resolvins D1 and D2 have a unique role in obesity-induced adipose inflammation. This is 15-hydroxyprostaglandin dehydrogenase [NAD(+)] (Hpgd) from Rattus norvegicus (Rat).